Here is an 85-residue protein sequence, read N- to C-terminus: Splicing factor 3B subunit 5 (85 aa).

Belongs to the SF3B5 family. As to quaternary structure, component of the SF3B complex. SF3B complex associates with the splicing factor SF3A complex and a 12S RNA unit to form the U2 small nuclear ribonucleoproteins complex (U2 snRNP). Identified in the SAGA transcription regulatory histone acetylation (HAT) complex; the interaction is RNA-independent.

It is found in the nucleus. Its function is as follows. Involved in pre-mRNA splicing as component of spliceosome. As part of the spliceosome complex, plays a role in the regulation of spermatogonial differentiation. When associated with the SAGA transcription regulatory histone acetylation (HAT) complex, might be involved in the transcriptional activation of a subset of SAGA-regulated genes. The chain is Splicing factor 3B subunit 5 from Drosophila melanogaster (Fruit fly).